The chain runs to 398 residues: DnaJ-like protein R260 (398 aa).

A J domain is found at 7 to 72 (DLYEILGLTP…EKRRVYDQYG (66 aa)). The CR-type zinc-finger motif lies at 118–202 (KKTVKVTITV…CKGAGINKSE (85 aa)). 4 CXXCXGXG motif repeats span residues 131–138 (CDDCDATG), 147–154 (CKVCRGKG), 173–180 (CHGCQGKK), and 190–197 (CPSCKGAG). A disordered region spans residues 364 to 398 (LRQINTDPSDESQDRDSEESYGGHGRPEGVGCAQQ). Residues 371 to 382 (PSDESQDRDSEE) are compositionally biased toward acidic residues.

Zn(2+) serves as cofactor.

The sequence is that of DnaJ-like protein R260 from Acanthamoeba polyphaga mimivirus (APMV).